The primary structure comprises 198 residues: Guanine nucleotide-binding protein subunit alpha-11 (198 aa).

Residues 1–11 form a G1 motif region; the sequence is LLGTGESGKST. The region spanning 1 to 198 is the G-alpha domain; it reads LLGTGESGKS…LSEYDHVLVE (198 aa). GTP-binding positions include 3–10 and 137–140; these read GTGESGKS and LRVR. S10 provides a ligand contact to Mg(2+). The interval 135–143 is G2 motif; that stretch reads DVLRVRVPT. T143 provides a ligand contact to Mg(2+). Positions 158–167 are G3 motif; that stretch reads FRMVDVGGQR.

It belongs to the G-alpha family. G(q) subfamily. In terms of assembly, g proteins are composed of 3 units; alpha, beta and gamma. The alpha chain contains the guanine nucleotide binding site. Interacts with RGS22. Interacts with NTSR1.

Its subcellular location is the cell membrane. It is found in the cytoplasm. It catalyses the reaction GTP + H2O = GDP + phosphate + H(+). In terms of biological role, guanine nucleotide-binding proteins (G proteins) function as transducers downstream of G protein-coupled receptors (GPCRs) in numerous signaling cascades. The alpha chain contains the guanine nucleotide binding site and alternates between an active, GTP-bound state and an inactive, GDP-bound state. Signaling by an activated GPCR promotes GDP release and GTP binding. The alpha subunit has a low GTPase activity that converts bound GTP to GDP, thereby terminating the signal. Both GDP release and GTP hydrolysis are modulated by numerous regulatory proteins. Signaling is mediated via phospholipase C-beta-dependent inositol lipid hydrolysis for signal propagation: activates phospholipase C-beta: following GPCR activation, GNA11 activates PLC-beta (PLCB1, PLCB2, PLCB3 or PLCB4), leading to production of diacylglycerol (DAG) and inositol 1,4,5-trisphosphate (IP3). Transduces FFAR4 signaling in response to long-chain fatty acids (LCFAs). Together with GNAQ, required for heart development. In the respiratory epithelium, transmits OXGR1-dependent signals that lead to downstream intracellular Ca(2+) release and mucocilliary clearance of airborne pathogens. The sequence is that of Guanine nucleotide-binding protein subunit alpha-11 (GNA11) from Canis lupus familiaris (Dog).